The chain runs to 1191 residues: Puratrophin-1 (1191 aa).

Disordered regions lie at residues 1-152 (MERP…DPVG) and 707-728 (AGGG…SDPR). A Phosphoserine modification is found at S64. Positions 111 to 120 (SHLSLAQGES) are enriched in polar residues. The 177-residue stretch at 732 to 908 (RLQLVLAEMV…HFQLRHGNDL (177 aa)) folds into the DH domain. One can recognise a PH domain in the interval 920-1027 (NLKEQGQLVR…WTADISHLLW (108 aa)). The segment at 1150–1176 (SLTAEDSEISSQCPSASGSSGSDSSCV) is disordered. A compositionally biased stretch (low complexity) spans 1159-1176 (SSQCPSASGSSGSDSSCV).

In terms of tissue distribution, expressed in kidney, Leydig cells in the testis, epithelial cells in the prostate gland and Langerhans islet in the pancreas. Isoform 1 and isoform 3 are strongly expressed in Purkinje cells and to a lower extent in other neurons (at protein level). Widely expressed at low levels. More strongly expressed in testis and pancreas.

In terms of biological role, possible role in intracellular signaling and cytoskeleton dynamics at the Golgi. The protein is Puratrophin-1 (PLEKHG4) of Homo sapiens (Human).